We begin with the raw amino-acid sequence, 276 residues long: Pantothenate synthetase (276 aa).

An ATP-binding site is contributed by 26–33; it reads MGFLHEGH. Histidine 33 functions as the Proton donor in the catalytic mechanism. Position 57 (glutamine 57) interacts with (R)-pantoate. Residue glutamine 57 coordinates beta-alanine. 142 to 145 is an ATP binding site; the sequence is GLKD. (R)-pantoate is bound at residue glutamine 148. ATP-binding positions include isoleucine 171 and 179 to 182; that span reads KSSR.

It belongs to the pantothenate synthetase family. In terms of assembly, homodimer.

Its subcellular location is the cytoplasm. The catalysed reaction is (R)-pantoate + beta-alanine + ATP = (R)-pantothenate + AMP + diphosphate + H(+). Its pathway is cofactor biosynthesis; (R)-pantothenate biosynthesis; (R)-pantothenate from (R)-pantoate and beta-alanine: step 1/1. Catalyzes the condensation of pantoate with beta-alanine in an ATP-dependent reaction via a pantoyl-adenylate intermediate. This is Pantothenate synthetase from Exiguobacterium sibiricum (strain DSM 17290 / CCUG 55495 / CIP 109462 / JCM 13490 / 255-15).